The following is a 135-amino-acid chain: HTH-type transcriptional activator AarP (135 aa).

The region spanning 22–120 is the HTH araC/xylS-type domain; it reads SEILVWIEGN…GISPSLYRLS (99 aa). 2 consecutive DNA-binding regions (H-T-H motif) follow at residues 39 to 60 and 87 to 110; these read DDIA…RKIV and VIDI…KAYL.

In terms of biological role, transcriptional activator of 2'-N-acetyltransferase. The protein is HTH-type transcriptional activator AarP (aarP) of Providencia stuartii.